Consider the following 165-residue polypeptide: Endoribonuclease YbeY (165 aa).

The Zn(2+) site is built by His130, His134, and His140.

This sequence belongs to the endoribonuclease YbeY family. It depends on Zn(2+) as a cofactor.

The protein localises to the cytoplasm. Its function is as follows. Single strand-specific metallo-endoribonuclease involved in late-stage 70S ribosome quality control and in maturation of the 3' terminus of the 16S rRNA. This chain is Endoribonuclease YbeY, found in Streptococcus pyogenes serotype M1.